The following is a 315-amino-acid chain: Ribosomal RNA small subunit methyltransferase H (315 aa).

S-adenosyl-L-methionine is bound by residues 35–37 (GGH), Asp55, Phe79, Asp101, and Gln108.

This sequence belongs to the methyltransferase superfamily. RsmH family.

The protein localises to the cytoplasm. It carries out the reaction cytidine(1402) in 16S rRNA + S-adenosyl-L-methionine = N(4)-methylcytidine(1402) in 16S rRNA + S-adenosyl-L-homocysteine + H(+). Its function is as follows. Specifically methylates the N4 position of cytidine in position 1402 (C1402) of 16S rRNA. The sequence is that of Ribosomal RNA small subunit methyltransferase H from Photobacterium profundum (strain SS9).